The following is a 67-amino-acid chain: Conotoxin Cal14.2c (67 aa).

The N-terminal stretch at 1–20 (MNVTVMFLVLLLLTMPLTDG) is a signal peptide. Residues 21 to 48 (FNIRATNGGELFGPVQRDAGNVLDHGFQ) constitute a propeptide that is removed on maturation.

Belongs to the conotoxin L superfamily. Contains 2 disulfide bonds. As to expression, expressed by the venom duct.

Its subcellular location is the secreted. In terms of biological role, probable neurotoxin with unknown target. Possibly targets ion channels. The sequence is that of Conotoxin Cal14.2c from Californiconus californicus (California cone).